A 421-amino-acid chain; its full sequence is MLPTNRNRPQQRPARSWYFISDMDFSDPKRKPRYLSKILMVALLTAMCVVMLTQPPCHRRTPSVFSIHEPGVTHVLVTGGAGYIGSHAALRLLKDSFRVTIVDNLSRGNMGAIKVLQNLFSEPGRLQFIYADLGDPKAVNRIFAENAFDAVMHFAAVAYVGESTLEPLRYYHNITSNTLVVLEAMAAHNVRTLIYSSTCATYGEPEKMPITEGTPQFPINPYGKAKKMAEDIILDFSKSKKADMAVMILRYFNVIGSDPEGRLGEAPKPELREHGRISGACFDAALGIIPGLKVKGTDYETPDGTCVRDYIDVTDLVDAHVKALNKAERGKVGIYNVGTGKGRSVKEFVEACKKATGVDIKVDYFPRRPGDYAEVYSDPAKINSELNWTAQHTDLLESLRVAWTWQKKHRSGYGPPQAMVL.

Residues 1–33 are Cytoplasmic-facing; that stretch reads MLPTNRNRPQQRPARSWYFISDMDFSDPKRKPR. A helical; Signal-anchor for type II membrane protein membrane pass occupies residues 34–53; sequence YLSKILMVALLTAMCVVMLT. At 54–421 the chain is on the lumenal side; sequence QPPCHRRTPS…GYGPPQAMVL (368 aa). 74-105 is an NAD(+) binding site; sequence HVLVTGGAGYIGSHAALRLLKDSFRVTIVDNL. The active-site Proton acceptor is Tyr-222.

This sequence belongs to the NAD(P)-dependent epimerase/dehydratase family. NAD(+) is required as a cofactor.

The protein localises to the golgi apparatus. It is found in the golgi stack membrane. The catalysed reaction is UDP-beta-L-arabinopyranose = UDP-alpha-D-xylose. The protein operates within nucleotide-sugar biosynthesis; UDP-L-arabinose biosynthesis; UDP-L-arabinose from UDP-alpha-D-xylose: step 1/1. It functions in the pathway cell wall biogenesis; cell wall polysaccharide biosynthesis. In Oryza sativa subsp. japonica (Rice), this protein is Probable UDP-arabinose 4-epimerase 1 (UEL-1).